The sequence spans 894 residues: Translation initiation factor IF-2 (894 aa).

The interval 47–305 (AHLNRENGSG…GSALQQSFQK (259 aa)) is disordered. Residues 68–82 (STLNIPGTGGKSKSV) are compositionally biased toward polar residues. Basic and acidic residues-rich tracts occupy residues 93-159 (VKRD…KDKV) and 166-219 (DMTK…KWTD). The span at 254 to 269 (GRSRNAKAARPAKKGN) shows a compositional bias: basic residues. A compositionally biased stretch (basic and acidic residues) spans 270–283 (KHSESKADREEARA). In terms of domain architecture, tr-type G spans 393-562 (PRAPVVTIMG…LLQAEVLELK (170 aa)). Positions 402–409 (GHVDHGKT) are G1. 402–409 (GHVDHGKT) provides a ligand contact to GTP. Residues 427–431 (GITQH) are G2. The interval 448-451 (DTPG) is G3. GTP-binding positions include 448 to 452 (DTPGH) and 502 to 505 (NKID). Residues 502-505 (NKID) are G4. The tract at residues 538-540 (SAK) is G5.

Belongs to the TRAFAC class translation factor GTPase superfamily. Classic translation factor GTPase family. IF-2 subfamily.

Its subcellular location is the cytoplasm. Its function is as follows. One of the essential components for the initiation of protein synthesis. Protects formylmethionyl-tRNA from spontaneous hydrolysis and promotes its binding to the 30S ribosomal subunits. Also involved in the hydrolysis of GTP during the formation of the 70S ribosomal complex. In Citrobacter koseri (strain ATCC BAA-895 / CDC 4225-83 / SGSC4696), this protein is Translation initiation factor IF-2.